Here is a 337-residue protein sequence, read N- to C-terminus: Methionyl-tRNA formyltransferase (337 aa).

110 to 113 (SLLP) is a binding site for (6S)-5,6,7,8-tetrahydrofolate.

This sequence belongs to the Fmt family.

It catalyses the reaction L-methionyl-tRNA(fMet) + (6R)-10-formyltetrahydrofolate = N-formyl-L-methionyl-tRNA(fMet) + (6S)-5,6,7,8-tetrahydrofolate + H(+). In terms of biological role, attaches a formyl group to the free amino group of methionyl-tRNA(fMet). The formyl group appears to play a dual role in the initiator identity of N-formylmethionyl-tRNA by promoting its recognition by IF2 and preventing the misappropriation of this tRNA by the elongation apparatus. The protein is Methionyl-tRNA formyltransferase of Frankia casuarinae (strain DSM 45818 / CECT 9043 / HFP020203 / CcI3).